A 118-amino-acid chain; its full sequence is Ribonuclease P protein component (118 aa).

The protein belongs to the RnpA family. Consists of a catalytic RNA component (M1 or rnpB) and a protein subunit.

The enzyme catalyses Endonucleolytic cleavage of RNA, removing 5'-extranucleotides from tRNA precursor.. RNaseP catalyzes the removal of the 5'-leader sequence from pre-tRNA to produce the mature 5'-terminus. It can also cleave other RNA substrates such as 4.5S RNA. The protein component plays an auxiliary but essential role in vivo by binding to the 5'-leader sequence and broadening the substrate specificity of the ribozyme. The polypeptide is Ribonuclease P protein component (Shewanella baltica (strain OS155 / ATCC BAA-1091)).